A 687-amino-acid chain; its full sequence is Triadin (687 aa).

Residues 1-47 lie on the Cytoplasmic side of the membrane; it reads MTEITAEGNASITTTVIDNKNGSVPKSPGKVLKRTVTEDIVTTFSSP. Residues 48–68 traverse the membrane as a helical segment; sequence AAWLLVIALIITWSAVAIVMF. The Lumenal segment spans residues 69–687; it reads DLVDYKNFSA…NSPGQKQQEQ (619 aa). Acidic residues predominate over residues 117-130; it reads DGDEDDEDADEDID. Disordered stretches follow at residues 117–265, 280–643, and 660–687; these read DGDE…EQKD, GDLK…QKSP, and FQFPVTPVQHSGENPGKSNSPGQKQQEQ. Basic and acidic residues predominate over residues 131–265; the sequence is KGEIEEPPLK…PAVPKHEQKD (135 aa). Over residues 295-306 the composition is skewed to polar residues; that stretch reads LTASRPALSTPS. Serine 303 and serine 306 each carry phosphoserine. The segment covering 307–356 has biased composition (basic and acidic residues); sequence LEEKEKEEKKKVEKKVTSDTKKKEKGEAKKKSEKETVIDGKGKEPGKPPE. Positions 357 to 370 are enriched in low complexity; the sequence is TKQTTTKLTTQAAA. Composition is skewed to basic and acidic residues over residues 371-390, 396-431, 442-459, and 466-501; these read TKDEKKEDSKKMKKPPEEKP, EKKEKHIEPAKTPKKEHPAPSEKHRKAKAEQAKEEI, GKKEEKAKTVEQGKDVKP, and LKKEEKSEPQPKKEVKLETQLKKEEKSEPQVKKEAK. N-linked (GlcNAc...) asparagine glycosylation occurs at asparagine 514. Basic and acidic residues-rich tracts occupy residues 539–583 and 594–630; these read TAEK…KVPP and TRAEKRGKISKDSKDAPAPKKDKDSKDVLHSKKDKEV. Polar residues-rich tracts occupy residues 631 to 643 and 667 to 687; these read TNNVSSPKKQKSP and VQHSGENPGKSNSPGQKQQEQ.

As to quaternary structure, homooligomer of variable subunit number; disulfide-linked. Interacts with CASQ1 in skeletal muscle. Interacts with CASQ2. Interacts with RYR1 in skeletal muscle. In terms of processing, phosphorylated by CaMK2. N-glycosylated. As to expression, detected in skeletal muscle (at protein level). Detected in skeletal muscle.

It localises to the sarcoplasmic reticulum membrane. The protein localises to the microsome. It is found in the cell membrane. Its subcellular location is the sarcolemma. Contributes to the regulation of lumenal Ca2+ release via the sarcoplasmic reticulum calcium release channels RYR1 and RYR2, a key step in triggering skeletal and heart muscle contraction. Required for normal organization of the triad junction, where T-tubules and the sarcoplasmic reticulum terminal cisternae are in close contact. Required for normal skeletal muscle strength. Plays a role in excitation-contraction coupling in the heart and in regulating the rate of heart beats. In Rattus norvegicus (Rat), this protein is Triadin.